The chain runs to 1626 residues: DNA topoisomerase 2-beta (1626 aa).

An N-acetylalanine modification is found at A2. Residue K3 is modified to N6-acetyllysine. Glycyl lysine isopeptide (Lys-Gly) (interchain with G-Cter in SUMO2) cross-links involve residues Q28, N29, K33, and K34. ATP is bound by residues N112, N141, and 169-171 (SSN). Residues K177 and K178 each participate in a glycyl lysine isopeptide (Lys-Gly) (interchain with G-Cter in SUMO2) cross-link. 182 to 189 (GRNGYGAK) serves as a coordination point for ATP. Glycyl lysine isopeptide (Lys-Gly) (interchain with G-Cter in SUMO2) cross-links involve residues K228 and K299. The segment at 363 to 365 (KKK) is interaction with DNA. Residues K367 and K373 each participate in a glycyl lysine isopeptide (Lys-Gly) (interchain with G-Cter in SUMO2) cross-link. Residue 397-399 (QTK) participates in ATP binding. Glycyl lysine isopeptide (Lys-Gly) (interchain with G-Cter in SUMO2) cross-links involve residues K437, K439, and K446. The region spanning 476-593 (CTLILTEGDS…SLLKHGFLEE (118 aa)) is the Toprim domain. 3 residues coordinate Mg(2+): E482, D562, and D564. Residues K600, K605, K635, K643, K646, K676, and K712 each participate in a glycyl lysine isopeptide (Lys-Gly) (interchain with G-Cter in SUMO2) cross-link. The 454-residue stretch at 736–1189 (IPSLVDGFKP…SPSDLWKEDL (454 aa)) folds into the Topo IIA-type catalytic domain. Catalysis depends on Y826, which acts as the O-(5'-phospho-DNA)-tyrosine intermediate. The tract at residues 1011–1020 (KLQTTLTCNS) is interaction with DNA. The short motif at 1034 to 1044 (ETVQDILKEFF) is the Nuclear export signal element. K1092 participates in a covalent cross-link: Glycyl lysine isopeptide (Lys-Gly) (interchain with G-Cter in SUMO2). Residues 1110–1140 (AWKEAQEKAAEEDETQNQHDDSSSDSGTPSG) form a disordered region. Residues K1214, K1217, K1226, and K1227 each participate in a glycyl lysine isopeptide (Lys-Gly) (interchain with G-Cter in SUMO2) cross-link. Phosphoserine is present on S1236. Residues K1250, K1262, and K1271 each participate in a glycyl lysine isopeptide (Lys-Gly) (interchain with G-Cter in SUMO2) cross-link. The interval 1274 to 1604 (FDEEFSGAPV…PSLPRTGRAR (331 aa)) is disordered. At T1292 the chain carries Phosphothreonine. Glycyl lysine isopeptide (Lys-Gly) (interchain with G-Cter in SUMO2) cross-links involve residues K1323 and K1327. 2 stretches are compositionally biased toward basic and acidic residues: residues 1334 to 1344 (PWSDDESKSES) and 1358 to 1370 (SLLRRAAAERPKY). S1336, S1340, S1342, S1344, and S1358 each carry phosphoserine. A Phosphotyrosine modification is found at Y1370. Acidic residues predominate over residues 1374-1392 (FSEEEDDDADDDDDDNNDL). The residue at position 1375 (S1375) is a Phosphoserine. K1398 participates in a covalent cross-link: Glycyl lysine isopeptide (Lys-Gly) (interchain with G-Cter in SUMO2). Position 1400 is a phosphoserine (S1400). At T1403 the chain carries Phosphothreonine. A Phosphoserine modification is found at S1413. Phosphotyrosine is present on Y1421. S1424 is subject to Phosphoserine. The span at 1430–1442 (ATPEKSLHDKKSQ) shows a compositional bias: basic and acidic residues. K1440 participates in a covalent cross-link: Glycyl lysine isopeptide (Lys-Gly) (interchain with G-Cter in SUMO2). Residues S1441, S1452, and S1454 each carry the phosphoserine modification. A Glycyl lysine isopeptide (Lys-Gly) (interchain with G-Cter in SUMO2) cross-link involves residue K1456. Basic and acidic residues predominate over residues 1456 to 1466 (KSEDDSAKFDS). Phosphoserine is present on residues S1461, S1466, S1473, and S1476. K1490 participates in a covalent cross-link: Glycyl lysine isopeptide (Lys-Gly) (interchain with G-Cter in SUMO2). The tract at residues 1506 to 1512 (KPKRAPK) is interaction with PLSCR1. Phosphoserine is present on residues S1522, S1524, and S1526. The span at 1539–1549 (GKGRGAKKRKA) shows a compositional bias: basic residues. A phosphoserine mark is found at S1550 and S1552. The segment covering 1563-1574 (KTSKTTSKKPKK) has biased composition (basic residues). T1575 is modified (phosphothreonine). S1576 and S1581 each carry phosphoserine. T1592 carries the post-translational modification Phosphothreonine. Phosphoserine is present on S1596. Y1609 carries the post-translational modification Phosphotyrosine. S1613 is modified (phosphoserine).

It belongs to the type II topoisomerase family. In terms of assembly, homodimer. Interacts with KIAA1210. Interacts with PLSCR1. Requires Mg(2+) as cofactor. Mn(2+) is required as a cofactor. Ca(2+) serves as cofactor. (Microbial infection) Deubiquitinated by Epstein-Barr virus BPLF1; leading to stabilized SUMOylated TOP2A trapped in cleavage complexes, which halts the DNA damage response to TOP2A-induced double-strand DNA breaks. In terms of processing, SUMOylated. Expressed in the tonsil, spleen, lymph node, thymus, skin, pancreas, testis, colon, kidney, liver, brain and lung. Also found in breast, colon and lung carcinomas, Hodgkin's disease, large-cell non-Hodgkin's lymphoma, lymphocytic lymphomas and seminomas.

Its subcellular location is the nucleus. It localises to the nucleolus. The protein localises to the nucleoplasm. The catalysed reaction is ATP-dependent breakage, passage and rejoining of double-stranded DNA.. Key decatenating enzyme that alters DNA topology by binding to two double-stranded DNA molecules, generating a double-stranded break in one of the strands, passing the intact strand through the broken strand, and religating the broken strand. Plays a role in B-cell differentiation. The polypeptide is DNA topoisomerase 2-beta (TOP2B) (Homo sapiens (Human)).